The following is a 195-amino-acid chain: Nicotinamide riboside kinase 1 (195 aa).

10-18 provides a ligand contact to ATP; it reads GVTNGGKTT. 2 residues coordinate Mg(2+): Thr17 and Asp36. The Proton acceptor role is filled by Asp36. Substrate contacts are provided by residues 36–39 and 55–56; these read DDFF and YD. Position 128 (Arg128) interacts with ATP. Substrate-binding positions include Arg129 and 134 to 135; that span reads YE. Residues 132-134 and 172-174 each bind ATP; these read RVY and RSE.

The protein belongs to the uridine kinase family. NRK subfamily. Monomer.

It carries out the reaction beta-nicotinamide D-riboside + ATP = beta-nicotinamide D-ribonucleotide + ADP + H(+). The catalysed reaction is beta-D-ribosylnicotinate + ATP = nicotinate beta-D-ribonucleotide + ADP + H(+). Its pathway is cofactor biosynthesis; NAD(+) biosynthesis. Its function is as follows. Catalyzes the phosphorylation of nicotinamide riboside (NR) and nicotinic acid riboside (NaR) to form nicotinamide mononucleotide (NMN) and nicotinic acid mononucleotide (NaMN). This is Nicotinamide riboside kinase 1 (Nmrk1) from Mus musculus (Mouse).